The following is a 606-amino-acid chain: MVISPSKKQAARRHTHSVKIGNLYVGSEHSIKMQSMTTTPTADVEATVTQICALVEAKCEIARVTVQGIKEAQACEHIKERLLSMGIAIPLVADIHFFPQAAMHVADFVDKVRINPGNFVDKRNMFTGKTYTDKNYADSLLRLEEKFTPLVEKCKRLGKAMRIGVNHGSLSERVMQRYGDTIEGMVVSALEYIEVCEKLGYRDVVFSMKSSNPKVMVAAYRQLAKDLDARGWHYPLHLGVTEAGIGLDGIIKSAVGIGTLLTEGLGDTIRCSLTGCPTTEIPVCESLLKHTTTYLDLPKKENPFALENSETFVNASKKITKATPWGSVYGVFIKLMKEHLLNNTVEKLLEQLGINPTNGKKDFTAPDGIIVPKSFIGTSVIEKLKEHLLVFHHHEVPCLYNHNEEIWNSEQVLSAPFVHCHATPPFIHSTREFFEKKQSNEQPVKLVFSKDLDDEFEAAVSIATEFGALLLDGLGEAVILDLPNVSLPTVREIAFSTLQSAGVRLVKTEYISCPGCGRTLFDLPEVTTRIREKTKHLVGLKIAVMGCIVNGPGEMADSDFGFVGSKTGMIDLYVKHTCVKAHIPMEDAEEELVRLLQEHGVWKDPE.

Residues C513, C516, C547, and E554 each contribute to the [4Fe-4S] cluster site.

This sequence belongs to the IspG family. The cofactor is [4Fe-4S] cluster.

The catalysed reaction is (2E)-4-hydroxy-3-methylbut-2-enyl diphosphate + oxidized [flavodoxin] + H2O + 2 H(+) = 2-C-methyl-D-erythritol 2,4-cyclic diphosphate + reduced [flavodoxin]. It participates in isoprenoid biosynthesis; isopentenyl diphosphate biosynthesis via DXP pathway; isopentenyl diphosphate from 1-deoxy-D-xylulose 5-phosphate: step 5/6. In terms of biological role, converts 2C-methyl-D-erythritol 2,4-cyclodiphosphate (ME-2,4cPP) into 1-hydroxy-2-methyl-2-(E)-butenyl 4-diphosphate. In Chlamydia caviae (strain ATCC VR-813 / DSM 19441 / 03DC25 / GPIC) (Chlamydophila caviae), this protein is 4-hydroxy-3-methylbut-2-en-1-yl diphosphate synthase (flavodoxin).